Here is a 605-residue protein sequence, read N- to C-terminus: Aspartate--tRNA(Asp/Asn) ligase (605 aa).

An L-aspartate-binding site is contributed by Glu178. Residues 202–205 form an aspartate region; sequence QLFK. Arg224 is an L-aspartate binding site. ATP-binding positions include 224–226 and Gln233; that span reads RDE. L-aspartate is bound at residue His458. Residue Glu488 participates in ATP binding. Arg495 is an L-aspartate binding site. 540 to 543 serves as a coordination point for ATP; the sequence is GLDR. A disordered region spans residues 580 to 605; sequence QQLKELHVTPAKPAKTTAKTKPRPAD.

It belongs to the class-II aminoacyl-tRNA synthetase family. Type 1 subfamily. As to quaternary structure, homodimer.

It localises to the cytoplasm. It carries out the reaction tRNA(Asx) + L-aspartate + ATP = L-aspartyl-tRNA(Asx) + AMP + diphosphate. Functionally, aspartyl-tRNA synthetase with relaxed tRNA specificity since it is able to aspartylate not only its cognate tRNA(Asp) but also tRNA(Asn). Reaction proceeds in two steps: L-aspartate is first activated by ATP to form Asp-AMP and then transferred to the acceptor end of tRNA(Asp/Asn). The sequence is that of Aspartate--tRNA(Asp/Asn) ligase from Thermosynechococcus vestitus (strain NIES-2133 / IAM M-273 / BP-1).